Consider the following 219-residue polypeptide: 7-cyano-7-deazaguanine synthase (219 aa).

ATP is bound at residue 9–19; sequence YSGGMDSFTVL. Zn(2+)-binding residues include C185, C193, C196, and C199.

The protein belongs to the QueC family. Zn(2+) is required as a cofactor.

It carries out the reaction 7-carboxy-7-deazaguanine + NH4(+) + ATP = 7-cyano-7-deazaguanine + ADP + phosphate + H2O + H(+). Its pathway is purine metabolism; 7-cyano-7-deazaguanine biosynthesis. Catalyzes the ATP-dependent conversion of 7-carboxy-7-deazaguanine (CDG) to 7-cyano-7-deazaguanine (preQ(0)). The chain is 7-cyano-7-deazaguanine synthase from Marinomonas sp. (strain MWYL1).